The primary structure comprises 107 residues: Large ribosomal subunit protein uL24 (107 aa).

It belongs to the universal ribosomal protein uL24 family. As to quaternary structure, part of the 50S ribosomal subunit.

One of two assembly initiator proteins, it binds directly to the 5'-end of the 23S rRNA, where it nucleates assembly of the 50S subunit. Functionally, one of the proteins that surrounds the polypeptide exit tunnel on the outside of the subunit. This Mycobacterium ulcerans (strain Agy99) protein is Large ribosomal subunit protein uL24.